A 373-amino-acid chain; its full sequence is Glutamine synthetase (373 aa).

Residue Ala-2 is modified to N-acetylalanine. Positions 2-25 are required for glutamine-induced ubiquitination by CRL4(CRBN) and proteasomal degradation; the sequence is ATSASSHLNKGIKQVYMSLPQGEK. 2 positions are modified to N6-acetyllysine: Lys-11 and Lys-14. The 83-residue stretch at 24-106 folds into the GS beta-grasp domain; sequence EKVQAMYIWI…VFCEVFKYNR (83 aa). Position 104 is a phosphotyrosine (Tyr-104). One can recognise a GS catalytic domain in the interval 113–373; the sequence is LRHTCKRIMD…TGDEPFQYKN (261 aa). Position 134 (Glu-134) interacts with ATP. Residues Glu-134, Glu-136, Glu-196, and Glu-203 each contribute to the Mn(2+) site. 203 to 208 lines the ATP pocket; the sequence is EFQIGP. 246 to 247 contacts L-glutamate; the sequence is NW. Residue His-253 coordinates Mn(2+). ATP contacts are provided by residues 255–257, Arg-319, and Arg-324; that span reads NFS. Arg-319 is an L-glutamate binding site. Residue 336 to 338 coordinates ADP; that stretch reads YFE. Glu-338 is a Mn(2+) binding site. Arg-340 lines the L-glutamate pocket. At Ser-343 the chain carries Phosphoserine.

It belongs to the glutamine synthetase family. As to quaternary structure, decamer; composed of two pentamers. Interacts with PALMD. Interacts with RHOJ. Interacts with BEST2; this interaction tethers a fraction of GLUL to the membrane, causing a decrease of cytosolic glutamine synthase (GS) activity and inhibits the chloride channel activity of BEST2 by affecting the gating at the aperture in the absence of intracellular glutamate. Mg(2+) serves as cofactor. Requires Mn(2+) as cofactor. Post-translationally, palmitoylated; undergoes autopalmitoylation. Acetylated by EP300/p300; acetylation is stimulated by increased glutamine levels and promotes ubiquitin-mediated proteasomal degradation. In terms of processing, ubiquitinated by ZNRF1. Ubiquitinated by the DCX (DDB1-CUL4-X-box) E3 ubiquitin-protein ligase complex called CRL4(CRBN), leading to proteasomal degradation.

It is found in the cytoplasm. The protein resides in the cytosol. The protein localises to the microsome. Its subcellular location is the mitochondrion. It localises to the cell membrane. It carries out the reaction L-glutamate + NH4(+) + ATP = L-glutamine + ADP + phosphate + H(+). The enzyme catalyses L-cysteinyl-[protein] + hexadecanoyl-CoA = S-hexadecanoyl-L-cysteinyl-[protein] + CoA. Glutamine synthetase activity is inhibited by methionine sulfoximine (MSO). Glutamine synthetase that catalyzes the ATP-dependent conversion of glutamate and ammonia to glutamine. Its role depends on tissue localization: in the brain, it regulates the levels of toxic ammonia and converts neurotoxic glutamate to harmless glutamine, whereas in the liver, it is one of the enzymes responsible for the removal of ammonia. Plays a key role in ammonium detoxification during erythropoiesis: the glutamine synthetase activity is required to remove ammonium generated by porphobilinogen deaminase (HMBS) during heme biosynthesis to prevent ammonium accumulation and oxidative stress. Essential for proliferation of fetal skin fibroblasts. Independently of its glutamine synthetase activity, required for endothelial cell migration during vascular development. Involved in angiogenesis by regulating membrane localization and activation of the GTPase RHOJ, possibly by promoting RHOJ palmitoylation. May act as a palmitoyltransferase for RHOJ: able to autopalmitoylate and then transfer the palmitoyl group to RHOJ. Plays a role in ribosomal 40S subunit biogenesis. Through the interaction with BEST2, inhibits BEST2 channel activity by affecting the gating at the aperture in the absence of intracellular L-glutamate, but sensitizes BEST2 to intracellular L-glutamate, which promotes the opening of BEST2 and thus relieves its inhibitory effect on BEST2. This Sus scrofa (Pig) protein is Glutamine synthetase.